The following is a 405-amino-acid chain: MNHLPMPTFGPLAGVRVVFSGIEIAGPFAGQMFAEWGAEVIWIENVAWADTIRVQPNYPQLSRRNLHALSLNIFKDEGREAFLKLMETTDIFIEASKGPAFARRGITDEVLWEHNPKLVIAHLSGFGQYGTEEYTNLPAYNTIAQAFSGYLIQNGDVDQPMPAFPYTADYFSGMTATTAALAALHKVRETGKGESIDIAMYEVMLRMGQYFMMDYFNGGEICPRMTKGKDPYYAGCGLYKCADGYIVMELVGITQINECFKDIGLAHILGTPEVPEGTQLIHRVECPYGPLVEEKLDAWLATHTIADVQARFAELNIACAKVLTIPELEGNPQYVARESITQWQTMDGRTCKGPNIMPKFKNNPGKIWRGMPSHGMDTAAILKNIGYSEADIKELVGKGLAKVED.

Residues K97 and R104 each contribute to the CoA site. D169 acts as the Nucleophile in catalysis.

It belongs to the CoA-transferase III family. CaiB subfamily. Homodimer.

The protein localises to the cytoplasm. It carries out the reaction crotonobetainyl-CoA + (R)-carnitine = crotonobetaine + (R)-carnitinyl-CoA. The catalysed reaction is 4-(trimethylamino)butanoyl-CoA + (R)-carnitine = (R)-carnitinyl-CoA + 4-(trimethylamino)butanoate. The protein operates within amine and polyamine metabolism; carnitine metabolism. In terms of biological role, catalyzes the reversible transfer of the CoA moiety from gamma-butyrobetainyl-CoA to L-carnitine to generate L-carnitinyl-CoA and gamma-butyrobetaine. Is also able to catalyze the reversible transfer of the CoA moiety from gamma-butyrobetainyl-CoA or L-carnitinyl-CoA to crotonobetaine to generate crotonobetainyl-CoA. The chain is L-carnitine CoA-transferase from Salmonella choleraesuis (strain SC-B67).